We begin with the raw amino-acid sequence, 388 residues long: Leucine aminopeptidase 1 (388 aa).

Positions 1 to 19 are cleaved as a signal peptide; it reads MKLPALLILGVAASTMVLA. Residues 20 to 88 constitute a propeptide that is removed on maturation; that stretch reads AIAPDQVPLN…LPKVFPTPAV (69 aa). 5 N-linked (GlcNAc...) asparagine glycosylation sites follow: N96, N119, N149, N164, and N181. Residues H189 and D207 each contribute to the Zn(2+) site. N232 is a glycosylation site (N-linked (GlcNAc...) asparagine). Zn(2+)-binding residues include E246 and D273. A disulfide bridge links C322 with C326. H355 lines the Zn(2+) pocket.

Belongs to the peptidase M28 family. M28E subfamily. As to quaternary structure, monomer. Zn(2+) is required as a cofactor.

The protein localises to the secreted. Extracellular aminopeptidase that allows assimilation of proteinaceous substrates. The chain is Leucine aminopeptidase 1 (LAP1) from Paracoccidioides brasiliensis (strain Pb03).